A 549-amino-acid chain; its full sequence is Guanine nucleotide-binding protein-like 3 (549 aa).

Basic residues predominate over residues 1–45 (MKRPKLKKASKRMTCHKRYKIQKKVREHHRKLRKEAKKRGHKKPR). Disordered regions lie at residues 1–56 (MKRP…SAPF) and 73–104 (ELKQQQKLDRQKELEKKRKLETNPDIKPSNVE). Residues 2–46 (KRPKLKKASKRMTCHKRYKIQKKVREHHRKLRKEAKKRGHKKPRK) form a basic region. A coiled-coil region spans residues 56–95 (FKEALLREAELRKQRLEELKQQQKLDRQKELEKKRKLETN). Residues 73 to 96 (ELKQQQKLDRQKELEKKRKLETNP) are compositionally biased toward basic and acidic residues. Residue K79 is modified to N6-acetyllysine. Glycyl lysine isopeptide (Lys-Gly) (interchain with G-Cter in SUMO2) cross-links involve residues K91 and K99. Residue S101 is modified to Phosphoserine. Glycyl lysine isopeptide (Lys-Gly) (interchain with G-Cter in SUMO2) cross-links involve residues K114, K179, K196, K253, K267, and K275. Positions 131–312 (CQELKKVIEA…IIDSPSFIVS (182 aa)) constitute a CP-type G domain. Residue 178–181 (NKSD) coordinates GTP. 261–268 (GFPNVGKS) serves as a coordination point for GTP. An intermediate region spans residues 282-456 (VGVSMGLTRS…HLANSILFQS (175 aa)). 305–308 (DSPS) is a binding site for GTP. An acidic region spans residues 465–543 (EEKDIHEELP…KIIEEDDAYD (79 aa)). The segment covering 474–483 (PKRKERKQEE) has biased composition (basic and acidic residues). The segment at 474-532 (PKRKERKQEEREDDKDSDQETVDEEVDENSSGMFAAEETGEALSEETTAGEQSTRSFIL) is disordered. The segment covering 484–501 (REDDKDSDQETVDEEVDE) has biased composition (acidic residues). A phosphoserine mark is found at S490, S504, S517, and S529. Residues 518–529 (EETTAGEQSTRS) are compositionally biased toward polar residues.

The protein belongs to the TRAFAC class YlqF/YawG GTPase family. Interacts with MDM2; this interaction stabilizes MDM2. Interaction with MDM2 occurs in the nucleoplasm and is triggered by a nucleolar release mechanism, such as mitosis-induced nucleolar disassembly. Indirectly interacts with TP53, via MDM2-binding. Interacts with TSC22D1 isoform 2. As to expression, increased levels in lung tissue in cancer patients.

It is found in the nucleus. Its subcellular location is the nucleolus. Functionally, may be required to maintain the proliferative capacity of stem cells. Stabilizes MDM2 by preventing its ubiquitination, and hence proteasomal degradation. This chain is Guanine nucleotide-binding protein-like 3 (GNL3), found in Homo sapiens (Human).